The sequence spans 239 residues: Peptidyl-tRNA hydrolase (239 aa).

A tRNA-binding site is contributed by Y14. The Proton acceptor role is filled by H19. Residues F64, N66, and N112 each coordinate tRNA.

This sequence belongs to the PTH family. As to quaternary structure, monomer.

The protein resides in the cytoplasm. It carries out the reaction an N-acyl-L-alpha-aminoacyl-tRNA + H2O = an N-acyl-L-amino acid + a tRNA + H(+). Functionally, hydrolyzes ribosome-free peptidyl-tRNAs (with 1 or more amino acids incorporated), which drop off the ribosome during protein synthesis, or as a result of ribosome stalling. In terms of biological role, catalyzes the release of premature peptidyl moieties from peptidyl-tRNA molecules trapped in stalled 50S ribosomal subunits, and thus maintains levels of free tRNAs and 50S ribosomes. This chain is Peptidyl-tRNA hydrolase, found in Rhizobium meliloti (strain 1021) (Ensifer meliloti).